Reading from the N-terminus, the 560-residue chain is Proteasome-associated ATPase (560 aa).

A compositionally biased stretch (basic and acidic residues) spans 1–19 (MSQQHDDRRPPDTADRDLA). Positions 1-21 (MSQQHDDRRPPDTADRDLARQ) are disordered. The stretch at 16-55 (RDLARQATSLAEKNERLTAALTAARAQLVEMKAQLEEVSK) forms a coiled coil. ATP is bound at residue 237 to 242 (GCGKTL). The interval 559–560 (YL) is docks into pockets in the proteasome alpha-ring.

Belongs to the AAA ATPase family. Homohexamer. Assembles into a hexameric ring structure that caps the 20S proteasome core. Strongly interacts with the prokaryotic ubiquitin-like protein Pup through a hydrophobic interface; the interacting region of ARC lies in its N-terminal coiled-coil domain. There is one Pup binding site per ARC hexamer ring. Upon ATP-binding, the C-terminus of ARC interacts with the alpha-rings of the proteasome core, possibly by binding to the intersubunit pockets.

It functions in the pathway protein degradation; proteasomal Pup-dependent pathway. Functionally, ATPase which is responsible for recognizing, binding, unfolding and translocation of pupylated proteins into the bacterial 20S proteasome core particle. May be essential for opening the gate of the 20S proteasome via an interaction with its C-terminus, thereby allowing substrate entry and access to the site of proteolysis. Thus, the C-termini of the proteasomal ATPase may function like a 'key in a lock' to induce gate opening and therefore regulate proteolysis. In Beutenbergia cavernae (strain ATCC BAA-8 / DSM 12333 / CCUG 43141 / JCM 11478 / NBRC 16432 / NCIMB 13614 / HKI 0122), this protein is Proteasome-associated ATPase.